We begin with the raw amino-acid sequence, 100 residues long: Large ribosomal subunit protein uL23 (100 aa).

This sequence belongs to the universal ribosomal protein uL23 family. As to quaternary structure, part of the 50S ribosomal subunit. Contacts protein L29, and trigger factor when it is bound to the ribosome.

Functionally, one of the early assembly proteins it binds 23S rRNA. One of the proteins that surrounds the polypeptide exit tunnel on the outside of the ribosome. Forms the main docking site for trigger factor binding to the ribosome. This is Large ribosomal subunit protein uL23 from Xylella fastidiosa (strain M23).